The following is a 413-amino-acid chain: Glutamate-1-semialdehyde 2,1-aminomutase (413 aa).

K260 is subject to N6-(pyridoxal phosphate)lysine.

The protein belongs to the class-III pyridoxal-phosphate-dependent aminotransferase family. HemL subfamily. Requires pyridoxal 5'-phosphate as cofactor.

It localises to the cytoplasm. It carries out the reaction (S)-4-amino-5-oxopentanoate = 5-aminolevulinate. Its pathway is porphyrin-containing compound metabolism; protoporphyrin-IX biosynthesis; 5-aminolevulinate from L-glutamyl-tRNA(Glu): step 2/2. The polypeptide is Glutamate-1-semialdehyde 2,1-aminomutase (Methanoregula boonei (strain DSM 21154 / JCM 14090 / 6A8)).